The primary structure comprises 635 residues: ATP-dependent zinc metalloprotease FtsH (635 aa).

The Cytoplasmic segment spans residues methionine 1–arginine 6. A helical membrane pass occupies residues serine 7–serine 27. The Periplasmic segment spans residues aspartate 28–threonine 103. A helical membrane pass occupies residues phenylalanine 104–phenylalanine 124. Over methionine 125 to isoleucine 635 the chain is Cytoplasmic. ATP is bound at residue glycine 195–threonine 202. Histidine 417 contributes to the Zn(2+) binding site. Glutamate 418 is a catalytic residue. Positions 421 and 495 each coordinate Zn(2+). The tract at residues serine 600–isoleucine 635 is disordered. Residues lysine 615–isoleucine 635 are compositionally biased toward basic and acidic residues.

This sequence in the central section; belongs to the AAA ATPase family. It in the C-terminal section; belongs to the peptidase M41 family. In terms of assembly, homohexamer. The cofactor is Zn(2+).

Its subcellular location is the cell inner membrane. Functionally, acts as a processive, ATP-dependent zinc metallopeptidase for both cytoplasmic and membrane proteins. Plays a role in the quality control of integral membrane proteins. This is ATP-dependent zinc metalloprotease FtsH from Rickettsia felis (strain ATCC VR-1525 / URRWXCal2) (Rickettsia azadi).